Consider the following 507-residue polypeptide: Phosphoenolpyruvate carboxylase (507 aa).

Residues M1–F25 are disordered.

This sequence belongs to the PEPCase type 2 family. As to quaternary structure, homotetramer. Mg(2+) is required as a cofactor.

It carries out the reaction oxaloacetate + phosphate = phosphoenolpyruvate + hydrogencarbonate. In terms of biological role, catalyzes the irreversible beta-carboxylation of phosphoenolpyruvate (PEP) to form oxaloacetate (OAA), a four-carbon dicarboxylic acid source for the tricarboxylic acid cycle. In Oenococcus oeni (strain ATCC BAA-331 / PSU-1), this protein is Phosphoenolpyruvate carboxylase.